The chain runs to 300 residues: Cation-efflux pump FieF (300 aa).

The chain crosses the membrane as a helical span at residues 24–44 (LLIKILAWWYTGSVSILAALV). Residues Asp45 and Asp49 each contribute to the Zn(2+) site. 2 helical membrane-spanning segments follow: residues 82–102 (AALA…LTSI) and 114–134 (PGVG…LVTF). Residues His153 and Asp157 each coordinate Zn(2+). 2 helical membrane-spanning segments follow: residues 156–176 (SDVM…YGWH) and 178–198 (ADAL…LRMG).

Belongs to the cation diffusion facilitator (CDF) transporter (TC 2.A.4) family. FieF subfamily. Homodimer.

Its subcellular location is the cell inner membrane. The catalysed reaction is Zn(2+)(in) + H(+)(out) = Zn(2+)(out) + H(+)(in). It catalyses the reaction Cd(2+)(in) + H(+)(out) = Cd(2+)(out) + H(+)(in). It carries out the reaction Fe(2+)(in) + H(+)(out) = Fe(2+)(out) + H(+)(in). Functionally, divalent metal cation transporter which exports Zn(2+), Cd(2+) and possibly Fe(2+). May be involved in zinc and iron detoxification by efflux. This Salmonella agona (strain SL483) protein is Cation-efflux pump FieF.